The following is a 135-amino-acid chain: Ribosome-binding factor A (135 aa).

This sequence belongs to the RbfA family. As to quaternary structure, monomer. Binds 30S ribosomal subunits, but not 50S ribosomal subunits or 70S ribosomes.

It is found in the cytoplasm. In terms of biological role, one of several proteins that assist in the late maturation steps of the functional core of the 30S ribosomal subunit. Associates with free 30S ribosomal subunits (but not with 30S subunits that are part of 70S ribosomes or polysomes). Required for efficient processing of 16S rRNA. May interact with the 5'-terminal helix region of 16S rRNA. This Aliivibrio fischeri (strain MJ11) (Vibrio fischeri) protein is Ribosome-binding factor A.